Here is a 309-residue protein sequence, read N- to C-terminus: MTAHSLIDAIRAAAPDLRGRLLENQSLADLTWFRVGGPAQVLFSPADEADLSAFLAALDPAVPVTVIGLGSNLIVRDGGIPGVAIRLGGKAFGSVEIDGETIRSGTAVPDMRLAKAAAEASLDGLAFFRGIPGSVGGALRMNAGAHGGETTDVLVEVRGIDRKGEVRRFTHAEMGFRYRHSSAPDDVIFTGATFRGRPGNREAIEAEMERVTAAREAAQPIRERTGGSTFKNPEGGKAWQLIDAAGCRGLIRGGAQVSEMHCNFLINRGGATAADIEGLGEEVRRRVRDHSGFELHWEIKRIGVEASPA.

The FAD-binding PCMH-type domain occupies 34–221; the sequence is RVGGPAQVLF…TAAREAAQPI (188 aa). R179 is a catalytic residue. The Proton donor role is filled by S228. The active site involves E298.

The protein belongs to the MurB family. FAD is required as a cofactor.

Its subcellular location is the cytoplasm. The catalysed reaction is UDP-N-acetyl-alpha-D-muramate + NADP(+) = UDP-N-acetyl-3-O-(1-carboxyvinyl)-alpha-D-glucosamine + NADPH + H(+). Its pathway is cell wall biogenesis; peptidoglycan biosynthesis. In terms of biological role, cell wall formation. The chain is UDP-N-acetylenolpyruvoylglucosamine reductase from Methylorubrum extorquens (strain PA1) (Methylobacterium extorquens).